Here is a 570-residue protein sequence, read N- to C-terminus: Proline--tRNA ligase (570 aa).

The protein belongs to the class-II aminoacyl-tRNA synthetase family. ProS type 1 subfamily. Homodimer.

It is found in the cytoplasm. The enzyme catalyses tRNA(Pro) + L-proline + ATP = L-prolyl-tRNA(Pro) + AMP + diphosphate. Functionally, catalyzes the attachment of proline to tRNA(Pro) in a two-step reaction: proline is first activated by ATP to form Pro-AMP and then transferred to the acceptor end of tRNA(Pro). As ProRS can inadvertently accommodate and process non-cognate amino acids such as alanine and cysteine, to avoid such errors it has two additional distinct editing activities against alanine. One activity is designated as 'pretransfer' editing and involves the tRNA(Pro)-independent hydrolysis of activated Ala-AMP. The other activity is designated 'posttransfer' editing and involves deacylation of mischarged Ala-tRNA(Pro). The misacylated Cys-tRNA(Pro) is not edited by ProRS. This chain is Proline--tRNA ligase, found in Shewanella pealeana (strain ATCC 700345 / ANG-SQ1).